Here is a 196-residue protein sequence, read N- to C-terminus: Orotate phosphoribosyltransferase (196 aa).

5-phospho-alpha-D-ribose 1-diphosphate is bound at residue 117 to 125 (EDIVTTGLS). Orotate-binding residues include Thr121 and Arg149.

It belongs to the purine/pyrimidine phosphoribosyltransferase family. PyrE subfamily. In terms of assembly, homodimer. Mg(2+) serves as cofactor.

It catalyses the reaction orotidine 5'-phosphate + diphosphate = orotate + 5-phospho-alpha-D-ribose 1-diphosphate. Its pathway is pyrimidine metabolism; UMP biosynthesis via de novo pathway; UMP from orotate: step 1/2. In terms of biological role, catalyzes the transfer of a ribosyl phosphate group from 5-phosphoribose 1-diphosphate to orotate, leading to the formation of orotidine monophosphate (OMP). In Methylorubrum extorquens (strain PA1) (Methylobacterium extorquens), this protein is Orotate phosphoribosyltransferase.